The sequence spans 211 residues: Endo-1,4-beta-xylanase 5 (211 aa).

Residues 1-16 form the signal peptide; it reads MKVTAAFASLLLTAFA. Residues 19 to 210 enclose the GH11 domain; it reads APEPVLVSRS…GVGSASVTIS (192 aa). Glu-106 functions as the Nucleophile in the catalytic mechanism. The Proton donor role is filled by Glu-197.

The protein belongs to the glycosyl hydrolase 11 (cellulase G) family.

The protein localises to the secreted. The enzyme catalyses Endohydrolysis of (1-&gt;4)-beta-D-xylosidic linkages in xylans.. It functions in the pathway glycan degradation; xylan degradation. Functionally, endo-1,4-beta-xylanase involved in the hydrolysis of xylan, a major structural heterogeneous polysaccharide found in plant biomass representing the second most abundant polysaccharide in the biosphere, after cellulose. The polypeptide is Endo-1,4-beta-xylanase 5 (XYN5) (Aspergillus niger).